Reading from the N-terminus, the 310-residue chain is Ribosomal RNA small subunit methyltransferase H (310 aa).

S-adenosyl-L-methionine contacts are provided by residues 47–49 (GGH), Asp66, Phe93, Asp108, and Gln115. The disordered stretch occupies residues 275-310 (RKPFMASEQEQADNPRSRSAKLRIARRRPDTARSGP). Over residues 301-310 (RRPDTARSGP) the composition is skewed to basic and acidic residues.

Belongs to the methyltransferase superfamily. RsmH family.

The protein resides in the cytoplasm. It carries out the reaction cytidine(1402) in 16S rRNA + S-adenosyl-L-methionine = N(4)-methylcytidine(1402) in 16S rRNA + S-adenosyl-L-homocysteine + H(+). Specifically methylates the N4 position of cytidine in position 1402 (C1402) of 16S rRNA. The polypeptide is Ribosomal RNA small subunit methyltransferase H (Synechococcus sp. (strain CC9311)).